Here is a 122-residue protein sequence, read N- to C-terminus: Succinate dehydrogenase assembly factor 3, mitochondrial (122 aa).

A mitochondrion-targeting transit peptide spans 1-47; sequence MHPSVVRLVKPRRPERITSPILPPLPLYRAILRAHHRKLPQELRYLG.

This sequence belongs to the complex I LYR family. SDHAF3 subfamily. Interacts with the iron-sulfur protein subunit within the SDH catalytic dimer.

The protein resides in the mitochondrion matrix. In terms of biological role, plays an essential role in the assembly of succinate dehydrogenase (SDH), an enzyme complex (also referred to as respiratory complex II) that is a component of both the tricarboxylic acid (TCA) cycle and the mitochondrial electron transport chain, and which couples the oxidation of succinate to fumarate with the reduction of ubiquinone (coenzyme Q) to ubiquinol. Promotes maturation of the iron-sulfur protein subunit of the SDH catalytic dimer, protecting it from the deleterious effects of oxidants. May act together with SDHAF1. The chain is Succinate dehydrogenase assembly factor 3, mitochondrial from Candida albicans (strain SC5314 / ATCC MYA-2876) (Yeast).